A 201-amino-acid polypeptide reads, in one-letter code: Probable nicotinate-nucleotide adenylyltransferase (201 aa).

Belongs to the NadD family.

The catalysed reaction is nicotinate beta-D-ribonucleotide + ATP + H(+) = deamido-NAD(+) + diphosphate. The protein operates within cofactor biosynthesis; NAD(+) biosynthesis; deamido-NAD(+) from nicotinate D-ribonucleotide: step 1/1. Catalyzes the reversible adenylation of nicotinate mononucleotide (NaMN) to nicotinic acid adenine dinucleotide (NaAD). The sequence is that of Probable nicotinate-nucleotide adenylyltransferase from Clostridium botulinum (strain Loch Maree / Type A3).